Here is a 309-residue protein sequence, read N- to C-terminus: Methionyl-tRNA formyltransferase (309 aa).

112–115 is a binding site for (6S)-5,6,7,8-tetrahydrofolate; sequence SLLP.

This sequence belongs to the Fmt family.

The catalysed reaction is L-methionyl-tRNA(fMet) + (6R)-10-formyltetrahydrofolate = N-formyl-L-methionyl-tRNA(fMet) + (6S)-5,6,7,8-tetrahydrofolate + H(+). Attaches a formyl group to the free amino group of methionyl-tRNA(fMet). The formyl group appears to play a dual role in the initiator identity of N-formylmethionyl-tRNA by promoting its recognition by IF2 and preventing the misappropriation of this tRNA by the elongation apparatus. The chain is Methionyl-tRNA formyltransferase from Bartonella bacilliformis (strain ATCC 35685 / KC583 / Herrer 020/F12,63).